A 498-amino-acid chain; its full sequence is NAC domain-containing protein 75 (498 aa).

The 168-residue stretch at 48-215 folds into the NAC domain; that stretch reads LPAGVKFDPT…ELVVSKIFYQ (168 aa). Residues 166–221 mediate DNA binding; that stretch reads KGCKKILVLYTNFGKNRKPEKTNWVMHQYHLGTHEEEKEGELVVSKIFYQTQPRQC. 4 disordered regions span residues 225 to 278, 338 to 374, 423 to 443, and 457 to 498; these read SSTS…PNRS, VMAE…QRHH, QQQL…GGRS, and STTH…DHHG. The segment covering 233 to 248 has biased composition (gly residues); sequence IGGGGGEASSGGGGGE. A compositionally biased stretch (low complexity) spans 256–266; sequence GTTSGGSCSSS. The segment covering 356–374 has biased composition (basic residues); the sequence is HMAHDHHHHHHQQQQQRHH. Residues 466-475 are compositionally biased toward polar residues; the sequence is GSSSMGNQQE.

In terms of tissue distribution, expressed in the vascular cylinder of roots. Expressed in the differentiation zone of the root stele.

The protein resides in the nucleus. Its function is as follows. Transcription activator involved in xylem formation. Promotes the expression of the secondary wall-associated transcription factor MYB46. Functions upstream of NAC030/VND7, a master switch of xylem vessel differentiation. Acts as a upstream regulator of NAC101/VND6 and LBD30/ASL19. In Arabidopsis thaliana (Mouse-ear cress), this protein is NAC domain-containing protein 75.